The following is a 189-amino-acid chain: Phosphoheptose isomerase (189 aa).

The region spanning 34–189 is the SIS domain; the sequence is VADTLKNGKK…CQAVDEAFRG (156 aa). Residue 49–51 participates in substrate binding; it reads NGG. Residues histidine 58 and glutamate 62 each coordinate Zn(2+). Substrate contacts are provided by residues glutamate 62, 91–92, 117–119, serine 122, and glutamine 169; these read ND and STS. Glutamine 169 and histidine 177 together coordinate Zn(2+).

This sequence belongs to the SIS family. GmhA subfamily. Homotetramer. It depends on Zn(2+) as a cofactor.

It localises to the cytoplasm. The enzyme catalyses 2 D-sedoheptulose 7-phosphate = D-glycero-alpha-D-manno-heptose 7-phosphate + D-glycero-beta-D-manno-heptose 7-phosphate. The protein operates within carbohydrate biosynthesis; D-glycero-D-manno-heptose 7-phosphate biosynthesis; D-glycero-alpha-D-manno-heptose 7-phosphate and D-glycero-beta-D-manno-heptose 7-phosphate from sedoheptulose 7-phosphate: step 1/1. Catalyzes the isomerization of sedoheptulose 7-phosphate in D-glycero-D-manno-heptose 7-phosphate. In Campylobacter concisus (strain 13826), this protein is Phosphoheptose isomerase.